A 348-amino-acid chain; its full sequence is Cuticle collagen rol-6 (348 aa).

Residues 76-348 (GYGATGVQPP…SARRHRKFQL (273 aa)) form a disordered region. The segment covering 120–137 (PGGGFPDGPFPNGGGPRG) has biased composition (gly residues). Triple-helical region regions lie at residues 152–178 (GPAGPEGEEGPDGHDGQDGVPGFDGKD), 196–258 (GPLG…DGER), 261–284 (GRPGPRGPPGEAGPEGPQGPTGRD), and 288–323 (GQSGPQGEPGLQGYGGAAGEDGPEGPPGAPGLPGKD). Low complexity predominate over residues 194–231 (PQGPLGPQGPNGAPGLRGMRGARGQPGRPGRDGNPGMP). Residues 297–306 (GLQGYGGAAG) show a composition bias toward gly residues. The segment covering 322–338 (KDAEYCKCPGREGDAGR) has biased composition (basic and acidic residues). The span at 339–348 (SARRHRKFQL) shows a compositional bias: basic residues.

The protein belongs to the cuticular collagen family. As to quaternary structure, collagen polypeptide chains are complexed within the cuticle by disulfide bonds and other types of covalent cross-links. Localizes in stripes along the alae.

Functionally, nematode cuticles are composed largely of collagen-like proteins. The cuticle functions both as an exoskeleton and as a barrier to protect the worm from its environment. May play a role in cuticle remodeling in response to the environment. Involved in body morphogenesis. This Caenorhabditis elegans protein is Cuticle collagen rol-6 (rol-6).